The primary structure comprises 251 residues: Copper transport protein CTR1 (251 aa).

The helical transmembrane segment at A90–V110 threads the bilayer. Residues D157–K173 are compositionally biased toward basic and acidic residues. The tract at residues D157–G176 is disordered. A helical transmembrane segment spans residues M208 to V228.

In terms of assembly, oligomer.

It is found in the cell membrane. Required for high affinity copper (probably reduced Cu I) transport into the cell. The polypeptide is Copper transport protein CTR1 (CTR1) (Candida albicans (strain SC5314 / ATCC MYA-2876) (Yeast)).